A 79-amino-acid polypeptide reads, in one-letter code: Cytochrome c oxidase subunit 7A1, mitochondrial (79 aa).

Residues 1–21 (MQALRVSRALIRSFNTTARNR) constitute a mitochondrion transit peptide. Topologically, residues 22 to 46 (FQNRVPEKQKLFQEDNDIPLYLKGG) are mitochondrial matrix. A helical membrane pass occupies residues 47–75 (IVDNILYRVTMGLCLGGSAYSMYCLGWAS). Residues 76 to 79 (FPRN) lie on the Mitochondrial intermembrane side of the membrane.

Belongs to the cytochrome c oxidase VIIa family. As to quaternary structure, component of the complex IV (CIV, cytochrome c oxidase), a multisubunit enzyme composed of 14 subunits. The complex is composed of a catalytic core of 3 subunits MT-CO1, MT-CO2 and MT-CO3, encoded in the mitochondrial DNA, and 11 supernumerary subunits COX4I1 (or COX4I2), COX5A, COX5B, COX6A2 (or COX6A1), COX6B1 (or COX6B2), COX6C, COX7A1 (or COX7A2), COX7B, COX7C, COX8B and NDUFA4, which are encoded in the nuclear genome. The complex exists as a monomer or a dimer and forms supercomplexes (SCs) in the inner mitochondrial membrane with NADH-ubiquinone oxidoreductase (complex I, CI) and ubiquinol-cytochrome c oxidoreductase (cytochrome b-c1 complex, complex III, CIII), resulting in different assemblies (supercomplex SCI(1)III(2)IV(1) and megacomplex MCI(2)III(2)IV(2)).

The protein resides in the mitochondrion inner membrane. The protein operates within energy metabolism; oxidative phosphorylation. Its function is as follows. Component of the mitochondrial respiratory complex IV (CIV, also named cytochrome c oxidase complex), the last enzyme in the mitochondrial electron transport chain which drives oxidative phosphorylation. The CIV complex is the component of the respiratory chain that catalyzes the reduction of oxygen to water. Acts as an assembly factor that specifically drives the homodimerization of CIV complexes, mediating the formation of mitochondrial respiratory supercomplexes (respirasomes) containing two CIV: supercomplxes with two molecules of CIV show improved activity. Despite being highly expressed in brown adipose tissue, not required for thermogenesis. This chain is Cytochrome c oxidase subunit 7A1, mitochondrial (COX7A1), found in Trachypithecus cristatus (Silvered leaf-monkey).